The sequence spans 331 residues: MQHRDNPEKAPLSDAPTVVEDRAADYRHASVLLDGAVEALMTDPDGCYLDGTFGRGGHSRAILQRLSPQGRLLAIDRDPAALAEGATWDDPRFTLRHGRFAELDDIARDAALHRRLSGVLLDVGVSSPQLDDASRGFSFLRDGPLDMRMDPTQGESAADWLARVSERDMSDVFKRYGEERFARRIAKAIVARRGERPITHTADLAELVKAAHPAWEKGKHPATRVFQAIRIHVNGELDQLEAALAAALESLAPGGRLVVISFHSLEDRLVKRFIRDKVRGDTHLPRDLPIRDTQLNRRLAMVGKARRPDEDEIALNPRARSAVMRVAQKLG.

Residues Gly-56–His-58, Asp-76, Phe-100, Asp-122, and Gln-129 contribute to the S-adenosyl-L-methionine site.

This sequence belongs to the methyltransferase superfamily. RsmH family.

The protein localises to the cytoplasm. It catalyses the reaction cytidine(1402) in 16S rRNA + S-adenosyl-L-methionine = N(4)-methylcytidine(1402) in 16S rRNA + S-adenosyl-L-homocysteine + H(+). Functionally, specifically methylates the N4 position of cytidine in position 1402 (C1402) of 16S rRNA. The polypeptide is Ribosomal RNA small subunit methyltransferase H (Chromohalobacter salexigens (strain ATCC BAA-138 / DSM 3043 / CIP 106854 / NCIMB 13768 / 1H11)).